The following is a 479-amino-acid chain: Acyltransferase easC (479 aa).

Catalysis depends on His161, which acts as the Proton acceptor.

Belongs to the plant acyltransferase family. As to quaternary structure, monomer.

The protein operates within antibiotic biosynthesis. In terms of biological role, acyltransferase; part of the gene cluster that mediates the biosynthesis of emericellamides, secondary metabolites acting as antibiotics. The biosynthesis of emericellamides initiates from the highly reducing polyketide synthase easB which catalyzes the formation of the linear polyketide chain. EasB produces several polyketides that can be further processed by the downstream enzymes. The polyketides are released from easB as linear polyketide carboxylic acids, which are converted to CoA thioesters by the acyl-CoA ligase easD. The substrates are then loaded onto the acyltransferase easC, which shuttles them to the first thiolation (T) domain of the nonribosomal peptide synthetase easA. EasA then performs condensation of the polyketides with one glycine, two alanine, one valine and one leucine residues. A last step of cyclization leads to the production of emericellamides. The sequence is that of Acyltransferase easC from Emericella nidulans (strain FGSC A4 / ATCC 38163 / CBS 112.46 / NRRL 194 / M139) (Aspergillus nidulans).